The chain runs to 427 residues: Serine--tRNA ligase (427 aa).

Position 231 to 233 (Thr-231 to Glu-233) interacts with L-serine. ATP is bound at residue Arg-262 to Glu-264. An L-serine-binding site is contributed by Glu-285. Residue Glu-349–Ser-352 participates in ATP binding. Position 385 (Ser-385) interacts with L-serine.

This sequence belongs to the class-II aminoacyl-tRNA synthetase family. Type-1 seryl-tRNA synthetase subfamily. Homodimer. The tRNA molecule binds across the dimer.

The protein resides in the cytoplasm. It carries out the reaction tRNA(Ser) + L-serine + ATP = L-seryl-tRNA(Ser) + AMP + diphosphate + H(+). The catalysed reaction is tRNA(Sec) + L-serine + ATP = L-seryl-tRNA(Sec) + AMP + diphosphate + H(+). It functions in the pathway aminoacyl-tRNA biosynthesis; selenocysteinyl-tRNA(Sec) biosynthesis; L-seryl-tRNA(Sec) from L-serine and tRNA(Sec): step 1/1. In terms of biological role, catalyzes the attachment of serine to tRNA(Ser). Is also able to aminoacylate tRNA(Sec) with serine, to form the misacylated tRNA L-seryl-tRNA(Sec), which will be further converted into selenocysteinyl-tRNA(Sec). This chain is Serine--tRNA ligase, found in Rhizobium leguminosarum bv. trifolii (strain WSM2304).